Reading from the N-terminus, the 619-residue chain is 1-deoxy-D-xylulose-5-phosphate synthase (619 aa).

Thiamine diphosphate contacts are provided by residues His76 and 117–119 (AHS). A Mg(2+)-binding site is contributed by Asp148. Residues 149-150 (GA), Asn177, Tyr284, and Glu366 each bind thiamine diphosphate. Asn177 serves as a coordination point for Mg(2+).

It belongs to the transketolase family. DXPS subfamily. Homodimer. Mg(2+) is required as a cofactor. It depends on thiamine diphosphate as a cofactor.

The catalysed reaction is D-glyceraldehyde 3-phosphate + pyruvate + H(+) = 1-deoxy-D-xylulose 5-phosphate + CO2. It functions in the pathway metabolic intermediate biosynthesis; 1-deoxy-D-xylulose 5-phosphate biosynthesis; 1-deoxy-D-xylulose 5-phosphate from D-glyceraldehyde 3-phosphate and pyruvate: step 1/1. In terms of biological role, catalyzes the acyloin condensation reaction between C atoms 2 and 3 of pyruvate and glyceraldehyde 3-phosphate to yield 1-deoxy-D-xylulose-5-phosphate (DXP). This is 1-deoxy-D-xylulose-5-phosphate synthase from Azoarcus sp. (strain BH72).